The chain runs to 306 residues: Grixazone synthase (306 aa).

Residues histidine 39, histidine 58, histidine 67, histidine 222, histidine 226, and histidine 248 each coordinate Cu(2+).

The protein belongs to the tyrosinase family. The cofactor is Cu(2+).

It catalyses the reaction 2 3-amino-4-hydroxybenzoate + N-acetyl-L-cysteine + 2 O2 + H(+) = grixazone B + CO2 + 4 H2O. The catalysed reaction is 2 3-amino-4-hydroxybenzaldehyde + N-acetyl-L-cysteine + 2 O2 = grixazone A + formate + 3 H2O + H(+). The enzyme catalyses 4 2-aminophenol + 3 O2 = 2 2-aminophenoxazin-3-one + 6 H2O. Its activity is regulated as follows. Inhibited by 3-amino-4-hydroxybenzensulfonic acid, 4-hydroxy-3-nitrobenzaldehyde, L-tyrosine, p-hydroxybenzaldehyde. Activated by the copper chaperone GriE. Involved in the biosynthesis of the parasiticide antibiotic grixazone. Catalyzes the oxidation of 3-amino-4-hydroxybenzoate (3,4-AHBOA) to yield the corresponding quinone imine which is then non-enzymatically conjugated with the thiol group of N-acetylcysteine. The resultant compound is oxidized to its quinone imine enzymatically and is then dimerized non-enzymatically with another quinone imine oxidized by GriF to yield grixazone B. 3-amino-4-hydroxybenzaldehyde (3,4-AHBAL) can also be used as substrate to yield grixazone A. In the grixazone biosynthetic pathway, it can also function as an o-aminophenol oxidase that catalyzes the formation of the phenoxazinone chromophore from alpha-aminophenol. It can also use 2-amino-4-methylphenol, and to a lesser extent, 3,4-dihydroxybenzaldehyde, catechol and 3,4-dihydroxy-L-phenylalanine (L-DOPA) as substrates. In contrast to tyrosinases, it does not display monophenolase activity. The sequence is that of Grixazone synthase from Streptomyces griseus subsp. griseus (strain JCM 4626 / CBS 651.72 / NBRC 13350 / KCC S-0626 / ISP 5235).